Reading from the N-terminus, the 467-residue chain is Gamma-aminobutyric acid receptor subunit rho-3 (467 aa).

Positions 1-24 are cleaved as a signal peptide; that stretch reads MVLAFQLVSFTYIWIILKPNVCAA. Residues 25-266 are Extracellular-facing; it reads SNIKMTHQRC…LFINFVLRRH (242 aa). Residues Arg111 and Ser175 each coordinate 4-aminobutanoate. A disulfide bridge links Cys184 with Cys198. Position 203 (Glu203) interacts with 4-aminobutanoate. Asn220 carries N-linked (GlcNAc...) asparagine glycosylation. A helical membrane pass occupies residues 267–287; it reads VFFFVLQTYFPAILMVMLSWV. Residues 288–299 lie on the Cytoplasmic side of the membrane; sequence SFWIDRRAVPAR. A helical membrane pass occupies residues 300-320; the sequence is VSLGITTVLTMSTIITAVSAS. Residues 321–331 are Extracellular-facing; it reads MPQVSYLKAVD. The chain crosses the membrane as a helical span at residues 332-352; it reads VYLWVSSLFVFLSVIEYAAVN. The tract at residues 347–448 is interaction with SQSTM1; that stretch reads EYAAVNYLTT…NNHVIDTYSR (102 aa). Residues 353–446 are Cytoplasmic-facing; that stretch reads YLTTVEERKQ…LENNHVIDTY (94 aa). The chain crosses the membrane as a helical span at residues 447–467; sequence SRILFPIVYILFNLFYWGVYV.

It belongs to the ligand-gated ion channel (TC 1.A.9) family. Gamma-aminobutyric acid receptor (TC 1.A.9.5) subfamily. GABRR3 sub-subfamily. In terms of assembly, three rho subunits (rho-1/GBRR1, rho-2/GBRR2 and rho-3/GBRR3) coassemble either to form functional homopentamers or heteropentamers. Forms a ternary complex with SQSTM1 and PRKCZ.

The protein localises to the postsynaptic cell membrane. The protein resides in the cell membrane. The catalysed reaction is chloride(in) = chloride(out). With respect to regulation, inhibited by TPMPA, a rho-specific antagonist, when forming a homopentamer. Rho subunit of the pentameric ligand-gated chloride channels responsible for mediating the effects of gamma-aminobutyric acid (GABA), the major inhibitory neurotransmitter in the brain. Rho-containing GABA-gated chloride channels are a subclass of GABA(A) receptors (GABAARs) entirely composed of rho subunits, where GABA molecules bind at the rho intersubunit interfaces. When activated by GABA, rho-GABAARs selectively allow the flow of chloride anions across the cell membrane down their electrochemical gradient. The polypeptide is Gamma-aminobutyric acid receptor subunit rho-3 (Homo sapiens (Human)).